Reading from the N-terminus, the 444-residue chain is Acyl-CoA 6-desaturase (444 aa).

Topologically, residues 1-131 are cytoplasmic; it reads MGKGGNQGEG…DMNLFKTNHV (131 aa). Residues 18-95 form the Cytochrome b5 heme-binding domain; sequence MPTFSWEEIQ…LKPLLIGELA (78 aa). The chain crosses the membrane as a helical span at residues 132–152; the sequence is FFLLLLAHIIALESIAWFTVF. Residues 153–157 are Lumenal-facing; that stretch reads YFGNG. Residues 158–178 traverse the membrane as a helical segment; sequence WIPTLITAFVLATSQAQAGWL. Residues 179–264 are Cytoplasmic-facing; it reads QHDYGHLSVY…KYLPYNHQHE (86 aa). Positions 180 to 184 match the Histidine box-1 motif; the sequence is HDYGH. Residues 217-221 carry the Histidine box-2 motif; the sequence is HFQHH. The chain crosses the membrane as a helical span at residues 265-285; the sequence is YFFLIGPPLLIPMYFQYQIIM. The Lumenal segment spans residues 286 to 305; sequence TMIVHKNWVDLAWAISYYIR. The helical transmembrane segment at 306–326 threads the bilayer; sequence FFVTYIPFYGILGALLFLNFI. Topologically, residues 327-444 are cytoplasmic; the sequence is RFLESHWFVW…KLWLDAYLHK (118 aa). Positions 382 to 386 match the Histidine box-3 motif; the sequence is QIEHH.

The protein belongs to the fatty acid desaturase type 1 family.

It localises to the endoplasmic reticulum membrane. It catalyses the reaction (9Z,12Z)-octadecadienoyl-CoA + 2 Fe(II)-[cytochrome b5] + O2 + 2 H(+) = (6Z,9Z,12Z)-octadecatrienoyl-CoA + 2 Fe(III)-[cytochrome b5] + 2 H2O. The catalysed reaction is (9Z,12Z,15Z)-octadecatrienoyl-CoA + 2 Fe(II)-[cytochrome b5] + O2 + 2 H(+) = (6Z,9Z,12Z,15Z)-octadecatetraenoyl-CoA + 2 Fe(III)-[cytochrome b5] + 2 H2O. The enzyme catalyses (9Z,12Z,15Z,18Z,21Z)-tetracosapentaenoyl-CoA + 2 Fe(II)-[cytochrome b5] + O2 + 2 H(+) = (6Z,9Z,12Z,15Z,18Z,21Z)-tetracosahexaenoyl-CoA + 2 Fe(III)-[cytochrome b5] + 2 H2O. It carries out the reaction (11E)-octadecenoyl-CoA + 2 Fe(II)-[cytochrome b5] + O2 + 2 H(+) = (6Z,11E)-octadecadienoyl-CoA + 2 Fe(III)-[cytochrome b5] + 2 H2O. It catalyses the reaction (11Z,14Z)-eicosadienoyl-CoA + 2 Fe(II)-[cytochrome b5] + O2 + 2 H(+) = (8Z,11Z,14Z)-eicosatrienoyl-CoA + 2 Fe(III)-[cytochrome b5] + 2 H2O. The catalysed reaction is (11Z,14Z,17Z)-eicosatrienoyl-CoA + 2 Fe(II)-[cytochrome b5] + O2 + 2 H(+) = (8Z,11Z,14Z,17Z)-eicosatetraenoyl-CoA + 2 Fe(III)-[cytochrome b5] + 2 H2O. It participates in lipid metabolism; polyunsaturated fatty acid biosynthesis. Functionally, involved in the biosynthesis of highly unsaturated fatty acids (HUFA) from the essential polyunsaturated fatty acids (PUFA) linoleic acid (LA) (18:2n-6) and alpha-linolenic acid (ALA) (18:3n-3) precursors, acting as a fatty acyl-coenzyme A (CoA) desaturase that introduces a cis double bond at carbon 6 of the fatty acyl chain. Catalyzes the first and rate limiting step in this pathway which is the desaturation of LA (18:2n-6) and ALA (18:3n-3) into gamma-linoleate (GLA) (18:3n-6) and stearidonate (18:4n-3), respectively. Subsequently, in the biosynthetic pathway of HUFA n-3 series, it desaturates tetracosapentaenoate (24:5n-3) to tetracosahexaenoate (24:6n-3), which is then converted to docosahexaenoate (DHA)(22:6n-3), an important lipid for nervous system function. It can also desaturate (11E)-octadecenoate (trans-vaccenoate) at carbon 6 generating (6Z,11E)-octadecadienoate. In addition to Delta-6 activity, this enzyme exhibits Delta-8 activity with slight biases toward n-3 fatty acyl-CoA substrates. The sequence is that of Acyl-CoA 6-desaturase (FADS2) from Macaca fascicularis (Crab-eating macaque).